The primary structure comprises 100 residues: uncharacterized protein (100 aa).

The helical transmembrane segment at 13–32 threads the bilayer; sequence IWSSLNIICLMVTFLNVQLS.

The protein resides in the mitochondrion membrane. This is an uncharacterized protein from Schizosaccharomyces pombe (strain 972 / ATCC 24843) (Fission yeast).